The primary structure comprises 68 residues: Large ribosomal subunit protein bL35 (68 aa).

The protein belongs to the bacterial ribosomal protein bL35 family.

The sequence is that of Large ribosomal subunit protein bL35 from Fusobacterium nucleatum subsp. nucleatum (strain ATCC 25586 / DSM 15643 / BCRC 10681 / CIP 101130 / JCM 8532 / KCTC 2640 / LMG 13131 / VPI 4355).